A 434-amino-acid polypeptide reads, in one-letter code: Citrate synthase (434 aa).

Catalysis depends on residues H310 and D368.

Belongs to the citrate synthase family.

It catalyses the reaction oxaloacetate + acetyl-CoA + H2O = citrate + CoA + H(+). It functions in the pathway carbohydrate metabolism; tricarboxylic acid cycle; isocitrate from oxaloacetate: step 1/2. This chain is Citrate synthase (gltA), found in Bradyrhizobium diazoefficiens (strain JCM 10833 / BCRC 13528 / IAM 13628 / NBRC 14792 / USDA 110).